A 292-amino-acid chain; its full sequence is Homoserine kinase (292 aa).

ATP is bound at residue 84-94; sequence PLSRGLGSSSA.

Belongs to the GHMP kinase family. Homoserine kinase subfamily.

It is found in the cytoplasm. The catalysed reaction is L-homoserine + ATP = O-phospho-L-homoserine + ADP + H(+). Its pathway is amino-acid biosynthesis; L-threonine biosynthesis; L-threonine from L-aspartate: step 4/5. Functionally, catalyzes the ATP-dependent phosphorylation of L-homoserine to L-homoserine phosphate. The protein is Homoserine kinase of Campylobacter jejuni subsp. jejuni serotype O:2 (strain ATCC 700819 / NCTC 11168).